Consider the following 401-residue polypeptide: Heparan-sulfate 6-O-sulfotransferase 1 (401 aa).

Residues methionine 1 to arginine 4 lie on the Cytoplasmic side of the membrane. A helical; Signal-anchor for type II membrane protein transmembrane segment spans residues alanine 5–glycine 27. The Lumenal portion of the chain corresponds to proline 28 to tryptophan 401. Histidine 83–threonine 91 serves as a coordination point for 3'-phosphoadenylyl sulfate. Substrate is bound by residues lysine 113–lysine 114, arginine 130, tryptophan 135, and histidine 140. Histidine 140 functions as the Proton acceptor in the catalytic mechanism. 3'-phosphoadenylyl sulfate contacts are provided by arginine 175 and serine 183. Residues histidine 187 and tryptophan 194 each coordinate substrate. Asparagine 254 carries an N-linked (GlcNAc...) asparagine glycan. Methionine 307–tyrosine 309 provides a ligand contact to 3'-phosphoadenylyl sulfate. An N-linked (GlcNAc...) asparagine glycan is attached at asparagine 310. Arginine 313–alanine 314 lines the 3'-phosphoadenylyl sulfate pocket. Residues glutamate 367–proline 389 are disordered.

This sequence belongs to the sulfotransferase 6 family. In terms of processing, N-glycosylated.

Its subcellular location is the membrane. It catalyses the reaction alpha-D-glucosaminyl-[heparan sulfate](n) + 3'-phosphoadenylyl sulfate = 6-sulfo-alpha-D-glucosaminyl-[heparan sulfate](n) + adenosine 3',5'-bisphosphate + H(+). Inhibited by dithiothreitol and stimulated by protamine. Functionally, 6-O-sulfation enzyme which catalyzes the transfer of sulfate from 3'-phosphoadenosine 5'-phosphosulfate (PAPS) to position 6 of the N-sulfoglucosamine residue (GlcNS) of heparan sulfate. Also transfers sulfate to CDSNS-heparin and performs the crucial step modification in the biosynthesis of anticoagulant heparan sulfate (HSact). Critical for normal neuronal development where it may play a role in neuron branching. May also play a role in limb development. May prefer iduronic acid. The chain is Heparan-sulfate 6-O-sulfotransferase 1 from Cricetulus griseus (Chinese hamster).